Here is a 640-residue protein sequence, read N- to C-terminus: Zinc finger and BTB domain-containing protein 22 (640 aa).

Positions 57–121 constitute a BTB domain; that stretch reads CDVSIRVQGR…AYTGRLSMAA (65 aa). Disordered regions lie at residues 191 to 244, 308 to 327, and 332 to 482; these read RSHA…PVFP, PAPA…EEED, and CEDD…GGTG. The span at 192–210 shows a compositional bias: polar residues; it reads SHASSRASENQSPSSSNYF. Phosphoserine is present on serine 203. The span at 318–327 shows a compositional bias: acidic residues; it reads PDLEEDEEED. Over residues 431 to 442 the composition is skewed to low complexity; sequence SSSSSSSSSSSS. Positions 469-482 are enriched in gly residues; that stretch reads GMPGGPGGTPGGTG. A C2H2-type 1; atypical zinc finger spans residues 490–511; it reads FLCHCGKAFSHKSMRDRHVNMH. 2 C2H2-type zinc fingers span residues 517–539 and 545–571; these read FDCP…MKTH and YECG…ERRH. Residues 571 to 640 form a disordered region; it reads HRLVGGGGGG…MGFGGGGGTN (70 aa). Positions 574-588 are enriched in gly residues; that stretch reads VGGGGGGGPGPGGPT.

The protein belongs to the krueppel C2H2-type zinc-finger protein family.

The protein localises to the nucleus. May be involved in transcriptional regulation. The polypeptide is Zinc finger and BTB domain-containing protein 22 (ZBTB22) (Canis lupus familiaris (Dog)).